A 374-amino-acid chain; its full sequence is Proteasomal ubiquitin receptor ADRM1 homolog (374 aa).

The Pru domain occupies 13–131 (SSSGHIVEFK…KKVTDALNKP (119 aa)). Disordered stretches follow at residues 126 to 166 (DALN…MNAP), 187 to 223 (SDTLPISSVPRGEDASSEADCEPSTNAAEEGSSNPLS), and 334 to 374 (ANLT…MDVD). 2 stretches are compositionally biased toward polar residues: residues 141–163 (SAGSNANTDRQSAGGSLISSSDM) and 209–223 (PSTNAAEEGSSNPLS). Positions 239 to 346 (SQKKEVAVSL…TKAEGGEDAA (108 aa)) constitute a DEUBAD domain. The segment covering 354-368 (DATREPEPKRNRPDN) has biased composition (basic and acidic residues).

It belongs to the ADRM1 family. As to quaternary structure, component of the 19S proteasome regulatory particle complex. The 26S proteasome consists of a 20S core particle (CP) and two 19S regulatory subunits (RP). Interacts with deubiquitinase ubh-4.

It localises to the cytoplasm. The protein localises to the nucleus. Its function is as follows. May function as a proteasomal ubiquitin receptor. May promote the deubiquitinating activity associated with the 26S proteasome. In Caenorhabditis elegans, this protein is Proteasomal ubiquitin receptor ADRM1 homolog.